A 371-amino-acid chain; its full sequence is Glycosyltransferase 8 domain-containing protein 1 (371 aa).

At 1 to 7 (MSFRKVN) the chain is on the cytoplasmic side. A helical; Signal-anchor for type II membrane protein transmembrane segment spans residues 8–28 (IVILVLAVALFLLVLHHNFLG). The Lumenal portion of the chain corresponds to 29 to 371 (LSSLLRNEVS…RRHVEISNTK (343 aa)). Residues N103 and N257 are each glycosylated (N-linked (GlcNAc...) asparagine).

It belongs to the glycosyltransferase 8 family.

It is found in the membrane. In Bos taurus (Bovine), this protein is Glycosyltransferase 8 domain-containing protein 1 (GLT8D1).